The following is a 231-amino-acid chain: MKSGLLFTTASLALTASAHYVFPALVQDGAATGDWKYVRDWTGSYGNGPVEDVTSLDIRCNKDASTNGNATETLPVKAGEEIGFTVRTNIGHPGPLLAYMAKAPGDASDFDGDGQVWFKIYEDGPTVTDDGLTWPSDGATNVNFTIPSSLPDGDYLLRVEHIALHGAGTEGGAQFYLSCGQVSVTGGGNGDPAPLVAFPGAYDPTDPGILINIYWPVPTNYTPPGPKVWSG.

Positions 1–18 are cleaved as a signal peptide; sequence MKSGLLFTTASLALTASA. His19 provides a ligand contact to Cu(2+). Residues Cys60 and Cys179 are joined by a disulfide bond. N-linked (GlcNAc...) asparagine glycosylation is found at Asn69 and Asn143. Residues His165 and Gln174 each contribute to the O2 site. Residue Tyr176 participates in Cu(2+) binding.

Belongs to the polysaccharide monooxygenase AA9 family. Cu(2+) serves as cofactor.

The protein localises to the secreted. It catalyses the reaction [(1-&gt;4)-beta-D-glucosyl]n+m + reduced acceptor + O2 = 4-dehydro-beta-D-glucosyl-[(1-&gt;4)-beta-D-glucosyl]n-1 + [(1-&gt;4)-beta-D-glucosyl]m + acceptor + H2O.. Its function is as follows. Lytic polysaccharide monooxygenase (LPMO) that depolymerizes crystalline and amorphous polysaccharides via the oxidation of scissile alpha- or beta-(1-4)-glycosidic bonds, yielding C1 oxidation products. Catalysis by LPMOs requires the reduction of the active-site copper from Cu(II) to Cu(I) by a reducing agent and H(2)O(2) or O(2) as a cosubstrate. The chain is AA9 family lytic polysaccharide monooxygenase C from Emericella nidulans (strain FGSC A4 / ATCC 38163 / CBS 112.46 / NRRL 194 / M139) (Aspergillus nidulans).